The primary structure comprises 142 residues: Large ribosomal subunit protein uL13 (142 aa).

The protein belongs to the universal ribosomal protein uL13 family. As to quaternary structure, part of the 50S ribosomal subunit.

Functionally, this protein is one of the early assembly proteins of the 50S ribosomal subunit, although it is not seen to bind rRNA by itself. It is important during the early stages of 50S assembly. The sequence is that of Large ribosomal subunit protein uL13 from Coxiella burnetii (strain CbuG_Q212) (Coxiella burnetii (strain Q212)).